The sequence spans 413 residues: Phosphopentomutase (413 aa).

Mn(2+) is bound by residues Asp11, Asp306, His311, Asp347, His348, and His359.

This sequence belongs to the phosphopentomutase family. It depends on Mn(2+) as a cofactor.

The protein localises to the cytoplasm. The catalysed reaction is 2-deoxy-alpha-D-ribose 1-phosphate = 2-deoxy-D-ribose 5-phosphate. It catalyses the reaction alpha-D-ribose 1-phosphate = D-ribose 5-phosphate. It participates in carbohydrate degradation; 2-deoxy-D-ribose 1-phosphate degradation; D-glyceraldehyde 3-phosphate and acetaldehyde from 2-deoxy-alpha-D-ribose 1-phosphate: step 1/2. In terms of biological role, isomerase that catalyzes the conversion of deoxy-ribose 1-phosphate (dRib-1-P) and ribose 1-phosphate (Rib-1-P) to deoxy-ribose 5-phosphate (dRib-5-P) and ribose 5-phosphate (Rib-5-P), respectively. This is Phosphopentomutase from Helicobacter pylori (strain P12).